The chain runs to 715 residues: ATP-dependent zinc metalloprotease FtsH (715 aa).

Over 1-10 (MKNKNRGFFR) the chain is Cytoplasmic. Residues 11-31 (SSLSYAFVILAVIFLIYSFFG) form a helical membrane-spanning segment. Residues 32 to 137 (RSDGSVKHLS…KPAASNFWGS (106 aa)) lie on the Extracellular side of the membrane. Residues 138 to 158 (MLTLILPTLIMFALLYWMLIG) form a helical membrane-spanning segment. The Cytoplasmic segment spans residues 159-715 (SQRGQGGSGG…LLDAVNNKFD (557 aa)). Positions 167–187 (GGPGGIMSFGRSKAKPADPKQ) are disordered. 233–240 (GPPGTGKT) provides a ligand contact to ATP. His-455 contributes to the Zn(2+) binding site. Residue Glu-456 is part of the active site. Positions 459 and 531 each coordinate Zn(2+).

This sequence in the central section; belongs to the AAA ATPase family. It in the C-terminal section; belongs to the peptidase M41 family. As to quaternary structure, homohexamer. Requires Zn(2+) as cofactor.

It is found in the cell membrane. Its function is as follows. Acts as a processive, ATP-dependent zinc metallopeptidase for both cytoplasmic and membrane proteins. Plays a role in the quality control of integral membrane proteins. In terms of biological role, can complement an E.coli ftsH disruption mutant. The protein is ATP-dependent zinc metalloprotease FtsH of Oenococcus oeni (Leuconostoc oenos).